We begin with the raw amino-acid sequence, 197 residues long: Large ribosomal subunit protein uL13A (197 aa).

A Phosphoserine modification is found at S151.

It belongs to the universal ribosomal protein uL13 family. In terms of assembly, component of the large ribosomal subunit (LSU). Mature yeast ribosomes consist of a small (40S) and a large (60S) subunit. The 40S small subunit contains 1 molecule of ribosomal RNA (18S rRNA) and at least 33 different proteins. The large 60S subunit contains 3 rRNA molecules (25S, 5.8S and 5S rRNA) and at least 46 different proteins.

It is found in the cytoplasm. It localises to the nucleus. The protein resides in the nucleolus. Its function is as follows. Component of the ribosome, a large ribonucleoprotein complex responsible for the synthesis of proteins in the cell. The small ribosomal subunit (SSU) binds messenger RNAs (mRNAs) and translates the encoded message by selecting cognate aminoacyl-transfer RNA (tRNA) molecules. The large subunit (LSU) contains the ribosomal catalytic site termed the peptidyl transferase center (PTC), which catalyzes the formation of peptide bonds, thereby polymerizing the amino acids delivered by tRNAs into a polypeptide chain. The nascent polypeptides leave the ribosome through a tunnel in the LSU and interact with protein factors that function in enzymatic processing, targeting, and the membrane insertion of nascent chains at the exit of the ribosomal tunnel. This Schizosaccharomyces pombe (strain 972 / ATCC 24843) (Fission yeast) protein is Large ribosomal subunit protein uL13A (rpl1602).